The primary structure comprises 197 residues: Imidazoleglycerol-phosphate dehydratase (197 aa).

Belongs to the imidazoleglycerol-phosphate dehydratase family.

The protein localises to the cytoplasm. The enzyme catalyses D-erythro-1-(imidazol-4-yl)glycerol 3-phosphate = 3-(imidazol-4-yl)-2-oxopropyl phosphate + H2O. It functions in the pathway amino-acid biosynthesis; L-histidine biosynthesis; L-histidine from 5-phospho-alpha-D-ribose 1-diphosphate: step 6/9. The sequence is that of Imidazoleglycerol-phosphate dehydratase from Thermobifida fusca (strain YX).